The primary structure comprises 83 residues: Protein CASPARIAN STRIP INTEGRITY FACTOR 1 (83 aa).

Positions 1–22 (MGMSPLTVKKLGFIFMIVSASA) are cleaved as a signal peptide. A disordered region spans residues 59–83 (MNTKDYGNNSPSPRLERPPFKLIPN). Y64 carries the sulfotyrosine modification. Hydroxyproline occurs at positions 69 and 71.

In terms of assembly, interacts with the specific receptor kinases GSO1 and GSO2. As to expression, expressed exclusively in the root stele.

Functionally, peptide hormone required for contiguous Casparian strip diffusion barrier formation in roots via the regulation of CASPs protein expression and distribution in a GSO1-GSO2 signaling pathway. The Casparian strip is required for ion homeostasis (e.g. iron and potassium ions). This chain is Protein CASPARIAN STRIP INTEGRITY FACTOR 1, found in Arabidopsis thaliana (Mouse-ear cress).